The following is a 361-amino-acid chain: 45 kDa calcium-binding protein (361 aa).

The N-terminal stretch at 1–35 (MVWLVAMTPRQSSLCGLAAHGLWFLGLVLLMDATA) is a signal peptide. An N-linked (GlcNAc...) asparagine glycan is attached at Asn-39. EF-hand domains are found at residues 97 to 132 (RSRRKLMVIFSKVDVNTDRRISAKEMQHWIMEKTAE) and 136 to 171 (EAVKENKLHFRAVDPDGDGHVSWDEYKVKFLASKGH). A Phosphoserine modification is found at Ser-98. Residues Asp-110, Asn-112, Asp-114, Arg-116, Glu-121, Asp-149, Asp-151, Asp-153, His-155, and Glu-160 each coordinate Ca(2+). A Phosphothreonine modification is found at Thr-192. EF-hand domains are found at residues 196 to 231 (LGNLRDRWYQADNPPADLLLTEDEFLSFLHPEHSRG), 232 to 267 (MLKFMVKEIFRDLDQDGDKQLSLPEFISLPVGTVEN), 277 to 312 (WVKDRKKEFEELIDSNHDGIVTMEELENYMDPMNEY), and 313 to 348 (NALNEAKQMIAIADENQNHHLEPEEILKYSEFFTGS). A Ca(2+)-binding site is contributed by Asp-212. Residue Thr-216 is modified to Phosphothreonine. Residues Glu-219, Asp-245, Asp-247, Asp-249, Gln-251, and Glu-256 each coordinate Ca(2+). Thr-264 is subject to Phosphothreonine. Residues Asp-290, Asn-292, and Asp-294 each contribute to the Ca(2+) site. At Thr-298 the chain carries Phosphothreonine. Residues Glu-301, Asp-326, Asn-328, Asn-330, His-332, and Glu-337 each coordinate Ca(2+). Residues 308 to 361 (PMNEYNALNEAKQMIAIADENQNHHLEPEEILKYSEFFTGSKLMDYARNVHEEF) are necessary for intracellular retention in Golgi apparatus lumen.

It belongs to the CREC family. As to expression, ubiquitous.

The protein resides in the golgi apparatus lumen. In terms of biological role, may regulate calcium-dependent activities in the endoplasmic reticulum lumen or post-ER compartment. This Mus musculus (Mouse) protein is 45 kDa calcium-binding protein (Sdf4).